The chain runs to 396 residues: Growth-regulating factor 1 (396 aa).

The region spanning 18 to 53 is the QLQ domain; that stretch reads PFTASQWQELEHQALIYKYMASGTPIPSDLILPLRR. 2 short sequence motifs (bipartite nuclear localization signal) span residues 86–105 and 123–130; these read RKAEDPEPGRCRRTDGKKWR and RGKNRSRK. One can recognise a WRC domain in the interval 90 to 134; it reads DPEPGRCRRTDGKKWRCSKEAYPDSKYCEKHMHRGKNRSRKPVEM. A disordered region spans residues 117-176; it reads CEKHMHRGKNRSRKPVEMSLATPPPPSSSATSAASNSSAGVAPTTTTTSSPAPSYSRPAP. The span at 120–129 shows a compositional bias: basic residues; that stretch reads HMHRGKNRSR. A compositionally biased stretch (low complexity) spans 144–174; the sequence is SSATSAASNSSAGVAPTTTTTSSPAPSYSRP.

The protein belongs to the GRF family. Highly expressed in the intercalary meristem of the internode and in the shoot apex. Detected in the leaf primordia and emerging leaves in the uppermost node. Preferentially localized in the epidermis and in the tissues surrounding vascular bundles of the intercalary meristem of the internode and in adventitious roots of the second highest node. Low expression in the coleoptile and in the youngest leaf.

Its subcellular location is the nucleus. Its function is as follows. Transcription activator that plays a regulatory role in gibberellin-induced stem elongation. The polypeptide is Growth-regulating factor 1 (GRF1) (Oryza sativa subsp. indica (Rice)).